The primary structure comprises 493 residues: MFKFATAVILCLAASSTLAQHNPHWWGNRNTIVHLFEWKWSDIAAECENFLGPKGFAGVQVSPVNENIISAGRPWWERYQPISYKLITRSGNEQEFADMVRRCNDVGVRIYVDVLLNHMSGDFDGIAVGTAGSEAEPSKKSYPGVPYSAQDFHPSCEITDWNDRFQVQQCELVGLKDLDQSSEWVRSKLIEFLDHLIELGVAGFRVDAAKHMAADDLSYIYSTISDLNTEHGFPHNARPFIFQEVIDHGHETVSREEYNQLGAVTEFRFSEEIGNAFRGNNALKWLQSWGTGWGFLASGQALTFVDNHDNQRDMGAVLNYKSPKQYKMATAFHLAYPYGISRVMSSFAFDDHDTAPPQDEQERIISPEFDEEGACVNGWICEHRWRQIYAMVGFKNAVRDTELSNWWDNGDSQISFCRGNKGFLAVNNNLYDLSQELQTCLPAGVYCDVICGSLVDGSCTGKSVIVDDSGFGYIHIGSEDFDGVLALHVDARV.

An N-terminal signal peptide occupies residues 1–19 (MFKFATAVILCLAASSTLA). Glutamine 20 carries the pyrrolidone carboxylic acid modification. A disulfide bond links cysteine 47 and cysteine 103. Residues asparagine 117, glutamine 168, and aspartate 177 each coordinate Ca(2+). A disulfide bond links cysteine 156 and cysteine 170. A chloride-binding site is contributed by arginine 205. Aspartate 207 serves as the catalytic Nucleophile. Position 211 (histidine 211) interacts with Ca(2+). Glutamate 244 serves as the catalytic Proton donor. Residues asparagine 307 and arginine 342 each contribute to the chloride site. Cystine bridges form between cysteine 375–cysteine 381, cysteine 417–cysteine 440, and cysteine 447–cysteine 459.

This sequence belongs to the glycosyl hydrolase 13 family. As to quaternary structure, monomer. Requires Ca(2+) as cofactor. Chloride serves as cofactor.

Its subcellular location is the secreted. It catalyses the reaction Endohydrolysis of (1-&gt;4)-alpha-D-glucosidic linkages in polysaccharides containing three or more (1-&gt;4)-alpha-linked D-glucose units.. This chain is Alpha-amylase-related protein (Amyrel), found in Drosophila ananassae (Fruit fly).